The chain runs to 133 residues: Large ribosomal subunit protein bL12 (133 aa).

This sequence belongs to the bacterial ribosomal protein bL12 family. Homodimer. Part of the ribosomal stalk of the 50S ribosomal subunit. Forms a multimeric L10(L12)X complex, where L10 forms an elongated spine to which 2 to 4 L12 dimers bind in a sequential fashion. Binds GTP-bound translation factors.

Its function is as follows. Forms part of the ribosomal stalk which helps the ribosome interact with GTP-bound translation factors. Is thus essential for accurate translation. This Ehrlichia chaffeensis (strain ATCC CRL-10679 / Arkansas) protein is Large ribosomal subunit protein bL12.